The chain runs to 339 residues: ATP-dependent 6-phosphofructokinase (339 aa).

ATP-binding positions include glycine 11, arginine 72–tyrosine 73, and glycine 102–serine 105. Residue aspartate 103 coordinates Mg(2+). Substrate is bound by residues threonine 125 to aspartate 127, arginine 162, and methionine 169 to arginine 171. The Proton acceptor role is filled by aspartate 127. ADP-binding positions include glycine 185 to aspartate 187 and lysine 214 to histidine 216. Substrate contacts are provided by residues glutamate 223, arginine 245, and histidine 251–arginine 254.

The protein belongs to the phosphofructokinase type A (PFKA) family. ATP-dependent PFK group I subfamily. Prokaryotic clade 'B1' sub-subfamily. Homotetramer. It depends on Mg(2+) as a cofactor.

Its subcellular location is the cytoplasm. The catalysed reaction is beta-D-fructose 6-phosphate + ATP = beta-D-fructose 1,6-bisphosphate + ADP + H(+). Its pathway is carbohydrate degradation; glycolysis; D-glyceraldehyde 3-phosphate and glycerone phosphate from D-glucose: step 3/4. Its activity is regulated as follows. Allosterically activated by ADP and other diphosphonucleosides, and allosterically inhibited by phosphoenolpyruvate. Catalyzes the phosphorylation of D-fructose 6-phosphate to fructose 1,6-bisphosphate by ATP, the first committing step of glycolysis. This is ATP-dependent 6-phosphofructokinase from Streptococcus thermophilus (strain ATCC BAA-491 / LMD-9).